We begin with the raw amino-acid sequence, 244 residues long: Pyridoxine 5'-phosphate synthase (244 aa).

Residue Asn-7 coordinates 3-amino-2-oxopropyl phosphate. 9-10 contributes to the 1-deoxy-D-xylulose 5-phosphate binding site; sequence DH. Arg-18 is a 3-amino-2-oxopropyl phosphate binding site. His-43 (proton acceptor) is an active-site residue. Residues Arg-45 and His-50 each coordinate 1-deoxy-D-xylulose 5-phosphate. The Proton acceptor role is filled by Glu-70. Thr-100 contributes to the 1-deoxy-D-xylulose 5-phosphate binding site. Residue His-191 is the Proton donor of the active site. Residues Gly-192 and 213–214 contribute to the 3-amino-2-oxopropyl phosphate site; that span reads GH.

The protein belongs to the PNP synthase family. As to quaternary structure, homooctamer; tetramer of dimers.

The protein resides in the cytoplasm. It carries out the reaction 3-amino-2-oxopropyl phosphate + 1-deoxy-D-xylulose 5-phosphate = pyridoxine 5'-phosphate + phosphate + 2 H2O + H(+). Its pathway is cofactor biosynthesis; pyridoxine 5'-phosphate biosynthesis; pyridoxine 5'-phosphate from D-erythrose 4-phosphate: step 5/5. Its function is as follows. Catalyzes the complicated ring closure reaction between the two acyclic compounds 1-deoxy-D-xylulose-5-phosphate (DXP) and 3-amino-2-oxopropyl phosphate (1-amino-acetone-3-phosphate or AAP) to form pyridoxine 5'-phosphate (PNP) and inorganic phosphate. The sequence is that of Pyridoxine 5'-phosphate synthase from Laribacter hongkongensis (strain HLHK9).